A 1342-amino-acid polypeptide reads, in one-letter code: DNA-directed RNA polymerase subunit beta (1342 aa).

N6-acetyllysine is present on residues K1022 and K1200.

This sequence belongs to the RNA polymerase beta chain family. The RNAP catalytic core consists of 2 alpha, 1 beta, 1 beta' and 1 omega subunit. When a sigma factor is associated with the core the holoenzyme is formed, which can initiate transcription.

It carries out the reaction RNA(n) + a ribonucleoside 5'-triphosphate = RNA(n+1) + diphosphate. Functionally, DNA-dependent RNA polymerase catalyzes the transcription of DNA into RNA using the four ribonucleoside triphosphates as substrates. The chain is DNA-directed RNA polymerase subunit beta from Shigella flexneri serotype 5b (strain 8401).